Consider the following 487-residue polypeptide: Argininosuccinate lyase (487 aa).

It belongs to the lyase 1 family. Argininosuccinate lyase subfamily.

The protein localises to the cytoplasm. It carries out the reaction 2-(N(omega)-L-arginino)succinate = fumarate + L-arginine. Its pathway is amino-acid biosynthesis; L-arginine biosynthesis; L-arginine from L-ornithine and carbamoyl phosphate: step 3/3. This Natranaerobius thermophilus (strain ATCC BAA-1301 / DSM 18059 / JW/NM-WN-LF) protein is Argininosuccinate lyase.